The primary structure comprises 253 residues: MQYTELVPGTLIRRYKRFLADVALASGDVVVAHCPNTGSMRAVDVPGCRVWLSPSRNPARKLAWTWELIELPMPDAPPALVSVHTGRANALVAQALQEARIPELAGYDTHKREVRVADARLDFRLSTAHAAAYVEVKQVTLREHDGHGYFPDSVSERGRRHLEALAARVAEGDRAVLLFCVAHTGIDAVAPAAHLDPAYAETLRRVAAQGVEVLAYGMSATWTHDGVPGDIALTRALPVSLERRLASATPLSD.

Belongs to the SfsA family.

The protein is Sugar fermentation stimulation protein homolog of Chromohalobacter salexigens (strain ATCC BAA-138 / DSM 3043 / CIP 106854 / NCIMB 13768 / 1H11).